The following is a 555-amino-acid chain: Oxygen-dependent choline dehydrogenase (555 aa).

Residue D4–E33 participates in FAD binding. The active-site Proton acceptor is H473.

It belongs to the GMC oxidoreductase family. Requires FAD as cofactor.

The enzyme catalyses choline + A = betaine aldehyde + AH2. It catalyses the reaction betaine aldehyde + NAD(+) + H2O = glycine betaine + NADH + 2 H(+). The protein operates within amine and polyamine biosynthesis; betaine biosynthesis via choline pathway; betaine aldehyde from choline (cytochrome c reductase route): step 1/1. Involved in the biosynthesis of the osmoprotectant glycine betaine. Catalyzes the oxidation of choline to betaine aldehyde and betaine aldehyde to glycine betaine at the same rate. The polypeptide is Oxygen-dependent choline dehydrogenase (Proteus mirabilis (strain HI4320)).